A 485-amino-acid chain; its full sequence is Mitochondria-eating protein (485 aa).

Positions 112–210 (TSHERELNEV…SILSSESSIL (99 aa)) form a coiled coil. Low complexity-rich tracts occupy residues 214–241 (LSRS…SPTS) and 471–485 (RSRS…TPRF). Disordered regions lie at residues 214–244 (LSRS…SAKL) and 451–485 (RSRS…TPRF).

It belongs to the MIEAP family.

Its subcellular location is the cytoplasm. It localises to the mitochondrion outer membrane. The protein localises to the mitochondrion matrix. Functionally, key regulator of mitochondrial quality that mediates the repairing or degradation of unhealthy mitochondria in response to mitochondrial damage. Mediator of mitochondrial protein catabolic process (also named MALM) by mediating the degradation of damaged proteins inside mitochondria by promoting the accumulation in the mitochondrial matrix of hydrolases that are characteristic of the lysosomal lumen. Also involved in mitochondrion degradation of damaged mitochondria by promoting the formation of vacuole-like structures (named MIV), which engulf and degrade unhealthy mitochondria by accumulating lysosomes. Binds cardiolipin. May form molecular condensates (non-membrane-bounded organelles) within mitochondria that compartmentalize and promote cardiolipin metabolism. The chain is Mitochondria-eating protein (spata18) from Xenopus laevis (African clawed frog).